Consider the following 129-residue polypeptide: Lysozyme C-1/C-2 (129 aa).

The region spanning 1 to 129 is the C-type lysozyme domain; that stretch reads KVFERCELAR…VSSYVEGCTL (129 aa). 4 cysteine pairs are disulfide-bonded: Cys6–Cys127, Cys30–Cys115, Cys65–Cys81, and Cys77–Cys95. Catalysis depends on residues Glu35 and Asp53.

Belongs to the glycosyl hydrolase 22 family. In terms of assembly, monomer.

It carries out the reaction Hydrolysis of (1-&gt;4)-beta-linkages between N-acetylmuramic acid and N-acetyl-D-glucosamine residues in a peptidoglycan and between N-acetyl-D-glucosamine residues in chitodextrins.. Its function is as follows. Lysozymes have primarily a bacteriolytic function; those in tissues and body fluids are associated with the monocyte-macrophage system and enhance the activity of immunoagents. The sequence is that of Lysozyme C-1/C-2 from Axis axis (Axis deer).